We begin with the raw amino-acid sequence, 537 residues long: Probable sterol O-acyltransferase 1 (537 aa).

The next 4 membrane-spanning stretches (helical) occupy residues 98–118 (FRGFYVLFWLSMAAWVLQLYA), 140–160 (FFVLFSSDFLMICLSFFSYGL), 174–194 (LGYTIQTLWQGFYMVLAVYWV), and 199–219 (FPIVQCVFFTLHCAVLIMKQF). A glycan (N-linked (GlcNAc...) asparagine) is linked at Asn-250. Transmembrane regions (helical) follow at residues 344–364 (FGLLALTLALVDWYFVPSAVA) and 384–404 (IMFPAIILYLIMFYLIFDCIL). An FYXDWWN motif motif is present at residues 418–424 (FYGAWWN). A run of 2 helical transmembrane segments spans residues 462–482 (AVLLTFLISALVHEFVMLLAT) and 517–537 (VFFWIGMFTGPSFLCILYIVF). Residue His-474 is part of the active site.

This sequence belongs to the membrane-bound acyltransferase family. Sterol o-acyltransferase subfamily.

Its subcellular location is the endoplasmic reticulum membrane. Functionally, sterol O-acyltransferase that catalyzes the formation of stery esters. This Schizosaccharomyces pombe (strain 972 / ATCC 24843) (Fission yeast) protein is Probable sterol O-acyltransferase 1 (are1).